The following is a 327-amino-acid chain: Methionyl-tRNA formyltransferase (327 aa).

121–124 contributes to the (6S)-5,6,7,8-tetrahydrofolate binding site; it reads SLLP.

This sequence belongs to the Fmt family.

The enzyme catalyses L-methionyl-tRNA(fMet) + (6R)-10-formyltetrahydrofolate = N-formyl-L-methionyl-tRNA(fMet) + (6S)-5,6,7,8-tetrahydrofolate + H(+). In terms of biological role, attaches a formyl group to the free amino group of methionyl-tRNA(fMet). The formyl group appears to play a dual role in the initiator identity of N-formylmethionyl-tRNA by promoting its recognition by IF2 and preventing the misappropriation of this tRNA by the elongation apparatus. The sequence is that of Methionyl-tRNA formyltransferase from Burkholderia mallei (strain ATCC 23344).